A 216-amino-acid chain; its full sequence is Orotate phosphoribosyltransferase (216 aa).

5-phospho-alpha-D-ribose 1-diphosphate contacts are provided by residues Arg100, Lys104, His106, and 126-134 (EDLISTGGS). Residue Ser130 participates in orotate binding.

Belongs to the purine/pyrimidine phosphoribosyltransferase family. PyrE subfamily. As to quaternary structure, homodimer. Interacts with BrxC. Requires Mg(2+) as cofactor.

It carries out the reaction orotidine 5'-phosphate + diphosphate = orotate + 5-phospho-alpha-D-ribose 1-diphosphate. It functions in the pathway pyrimidine metabolism; UMP biosynthesis via de novo pathway; UMP from orotate: step 1/2. Catalyzes the transfer of a ribosyl phosphate group from 5-phosphoribose 1-diphosphate to orotate, leading to the formation of orotidine monophosphate (OMP). The protein is Orotate phosphoribosyltransferase of Bacillus subtilis (strain 168).